A 119-amino-acid polypeptide reads, in one-letter code: MSADSESMIESAPISFTDAAAAKVKELRDDEGNPNLKLRVYITGGGCAGFSYGFTFDETVNEDDTSVEKEGVILLVDAMSIQYLDGSVVDYEKGLMGSRFVVSNPNAATTCGCGSSFSV.

Iron-sulfur cluster contacts are provided by C47, C111, and C113.

It belongs to the HesB/IscA family. As to quaternary structure, homodimer. Iron-sulfur cluster serves as cofactor.

Functionally, required for insertion of 4Fe-4S clusters for at least IspG. The protein is Iron-sulfur cluster insertion protein ErpA of Alcanivorax borkumensis (strain ATCC 700651 / DSM 11573 / NCIMB 13689 / SK2).